We begin with the raw amino-acid sequence, 385 residues long: 1-deoxy-D-xylulose 5-phosphate reductoisomerase (385 aa).

T10, G11, S12, I13, K37, and N124 together coordinate NADPH. K125 lines the 1-deoxy-D-xylulose 5-phosphate pocket. E126 contributes to the NADPH binding site. A Mn(2+)-binding site is contributed by D150. Residues S151, E152, S176, and H199 each contribute to the 1-deoxy-D-xylulose 5-phosphate site. A Mn(2+)-binding site is contributed by E152. G205 serves as a coordination point for NADPH. Residues S212, N217, K218, and E221 each coordinate 1-deoxy-D-xylulose 5-phosphate. E221 is a Mn(2+) binding site.

This sequence belongs to the DXR family. Mg(2+) serves as cofactor. It depends on Mn(2+) as a cofactor.

It catalyses the reaction 2-C-methyl-D-erythritol 4-phosphate + NADP(+) = 1-deoxy-D-xylulose 5-phosphate + NADPH + H(+). It participates in isoprenoid biosynthesis; isopentenyl diphosphate biosynthesis via DXP pathway; isopentenyl diphosphate from 1-deoxy-D-xylulose 5-phosphate: step 1/6. Functionally, catalyzes the NADPH-dependent rearrangement and reduction of 1-deoxy-D-xylulose-5-phosphate (DXP) to 2-C-methyl-D-erythritol 4-phosphate (MEP). The sequence is that of 1-deoxy-D-xylulose 5-phosphate reductoisomerase from Clostridium botulinum (strain ATCC 19397 / Type A).